Consider the following 890-residue polypeptide: DNA mismatch repair protein MutS (890 aa).

607 to 614 (GPNMSGKS) contributes to the ATP binding site.

This sequence belongs to the DNA mismatch repair MutS family.

In terms of biological role, this protein is involved in the repair of mismatches in DNA. It is possible that it carries out the mismatch recognition step. This protein has a weak ATPase activity. In Bacillus thuringiensis (strain Al Hakam), this protein is DNA mismatch repair protein MutS.